A 456-amino-acid chain; its full sequence is Bifunctional protein GlmU (456 aa).

The pyrophosphorylase stretch occupies residues 1 to 229; that stretch reads MLNNAMSVVI…LSEVEGVNNR (229 aa). UDP-N-acetyl-alpha-D-glucosamine is bound by residues 11–14, Lys25, Gln76, 81–82, 103–105, Gly140, Glu154, Asn169, and Asn227; these read LAAG, GT, and YGD. Asp105 contacts Mg(2+). Asn227 contacts Mg(2+). Positions 230 to 250 are linker; it reads LQLSRLERVYQSEQAEKLLLA. The N-acetyltransferase stretch occupies residues 251 to 456; it reads GVMLRDPARF…EGWRRPVKKK (206 aa). 2 residues coordinate UDP-N-acetyl-alpha-D-glucosamine: Arg333 and Lys351. The Proton acceptor role is filled by His363. UDP-N-acetyl-alpha-D-glucosamine is bound by residues Tyr366 and Asn377. Residues Ala380, 386–387, Ser405, Ala423, and Arg440 each bind acetyl-CoA; that span reads NY.

In the N-terminal section; belongs to the N-acetylglucosamine-1-phosphate uridyltransferase family. The protein in the C-terminal section; belongs to the transferase hexapeptide repeat family. Homotrimer. Mg(2+) serves as cofactor.

The protein localises to the cytoplasm. It catalyses the reaction alpha-D-glucosamine 1-phosphate + acetyl-CoA = N-acetyl-alpha-D-glucosamine 1-phosphate + CoA + H(+). The enzyme catalyses N-acetyl-alpha-D-glucosamine 1-phosphate + UTP + H(+) = UDP-N-acetyl-alpha-D-glucosamine + diphosphate. Its pathway is nucleotide-sugar biosynthesis; UDP-N-acetyl-alpha-D-glucosamine biosynthesis; N-acetyl-alpha-D-glucosamine 1-phosphate from alpha-D-glucosamine 6-phosphate (route II): step 2/2. It functions in the pathway nucleotide-sugar biosynthesis; UDP-N-acetyl-alpha-D-glucosamine biosynthesis; UDP-N-acetyl-alpha-D-glucosamine from N-acetyl-alpha-D-glucosamine 1-phosphate: step 1/1. It participates in bacterial outer membrane biogenesis; LPS lipid A biosynthesis. Catalyzes the last two sequential reactions in the de novo biosynthetic pathway for UDP-N-acetylglucosamine (UDP-GlcNAc). The C-terminal domain catalyzes the transfer of acetyl group from acetyl coenzyme A to glucosamine-1-phosphate (GlcN-1-P) to produce N-acetylglucosamine-1-phosphate (GlcNAc-1-P), which is converted into UDP-GlcNAc by the transfer of uridine 5-monophosphate (from uridine 5-triphosphate), a reaction catalyzed by the N-terminal domain. The chain is Bifunctional protein GlmU from Escherichia coli O81 (strain ED1a).